We begin with the raw amino-acid sequence, 334 residues long: Putative fatty acid elongase 1 (334 aa).

Residues 1–51 (MDLTGAHMLKIHRPSIDHPFGVDLWHLFEQLSIKTIGWNPSEFEYIPGKTP) lie on the Lumenal side of the membrane. A helical transmembrane segment spans residues 52–72 (MSQWSSVIVSITAYYVIILSG). Residues 73–86 (RAIMTNRKPLKQRR) are Cytoplasmic-facing. The helical transmembrane segment at 87 to 107 (LFQLHNFILTIISGALLALLV) threads the bilayer. The Lumenal portion of the chain corresponds to 108-135 (EEVFRNYMRNGLFYCVCDSRHFTQRLVT). The helical transmembrane segment at 136–156 (LYYLNYLTKYLELMDTVFLFL) threads the bilayer. Residues 157-160 (KKKP) lie on the Cytoplasmic side of the membrane. A helical transmembrane segment spans residues 161 to 181 (LAFLHCYHHGITALLCFTQLL). Topologically, residues 182-187 (GRTSVQ) are lumenal. The helical transmembrane segment at 188–208 (WGVIGLNLYVHVIMYSYYFLA) threads the bilayer. Residues 209-224 (ACGRRVWWKQWVTRVQ) are Cytoplasmic-facing. Residues 225–245 (IIQFVLDLILCYFGTYSHIAF) form a helical membrane-spanning segment. At 246–260 (RYFPWLPHVGDCSGS) the chain is on the lumenal side. Residues 261–281 (LFAAFFGCGVLSSYLFLFIGF) traverse the membrane as a helical segment. The Cytoplasmic segment spans residues 282–334 (YINTYIKRGAKKNQRKAAGKADNTSVAAAAGSEALAATTATNASPFSARSRKL). A Phosphoserine modification is found at Ser325.

The protein belongs to the ELO family.

It localises to the endoplasmic reticulum membrane. It carries out the reaction a very-long-chain acyl-CoA + malonyl-CoA + H(+) = a very-long-chain 3-oxoacyl-CoA + CO2 + CoA. Functionally, may be involved in the synthesis of very long chain fatty acids. In Schizosaccharomyces pombe (strain 972 / ATCC 24843) (Fission yeast), this protein is Putative fatty acid elongase 1.